Reading from the N-terminus, the 684-residue chain is Probable phosphoenolpyruvate synthase (684 aa).

H424 (tele-phosphohistidine intermediate) is an active-site residue. 3 residues coordinate substrate: R517, R564, and E661. E661 contributes to the Mg(2+) binding site.

It belongs to the PEP-utilizing enzyme family. Requires Mg(2+) as cofactor.

It catalyses the reaction pyruvate + ATP + H2O = phosphoenolpyruvate + AMP + phosphate + 2 H(+). The protein operates within carbohydrate biosynthesis; gluconeogenesis. Functionally, catalyzes the phosphorylation of pyruvate to phosphoenolpyruvate. The protein is Probable phosphoenolpyruvate synthase (ppsA) of Methanothermobacter thermautotrophicus (strain ATCC 29096 / DSM 1053 / JCM 10044 / NBRC 100330 / Delta H) (Methanobacterium thermoautotrophicum).